A 271-amino-acid chain; its full sequence is Thiazole synthase (271 aa).

Lys108 acts as the Schiff-base intermediate with DXP in catalysis. Residues Gly169, 195–196 (AG), and 217–218 (NS) contribute to the 1-deoxy-D-xylulose 5-phosphate site.

This sequence belongs to the ThiG family. As to quaternary structure, homotetramer. Forms heterodimers with either ThiH or ThiS.

It is found in the cytoplasm. It carries out the reaction [ThiS sulfur-carrier protein]-C-terminal-Gly-aminoethanethioate + 2-iminoacetate + 1-deoxy-D-xylulose 5-phosphate = [ThiS sulfur-carrier protein]-C-terminal Gly-Gly + 2-[(2R,5Z)-2-carboxy-4-methylthiazol-5(2H)-ylidene]ethyl phosphate + 2 H2O + H(+). The protein operates within cofactor biosynthesis; thiamine diphosphate biosynthesis. Its function is as follows. Catalyzes the rearrangement of 1-deoxy-D-xylulose 5-phosphate (DXP) to produce the thiazole phosphate moiety of thiamine. Sulfur is provided by the thiocarboxylate moiety of the carrier protein ThiS. In vitro, sulfur can be provided by H(2)S. The polypeptide is Thiazole synthase (Prochlorococcus marinus (strain SARG / CCMP1375 / SS120)).